The sequence spans 487 residues: Transcriptional adapter ADA2b (487 aa).

The span at 1–13 shows a compositional bias: polar residues; it reads MGRSRGNFQNFED. Residues 1-25 are disordered; that stretch reads MGRSRGNFQNFEDPTQRTRKKKNAA. A ZZ-type zinc finger spans residues 42 to 98; the sequence is GGKYNCDYCQKDITGKIRIKCAVCPDFDLCIECMSVGAEITPHKCDHPYRVMGNLTF. Residues cysteine 47, cysteine 50, cysteine 62, cysteine 65, cysteine 71, cysteine 74, histidine 84, and histidine 88 each contribute to the Zn(2+) site. Residues 100 to 152 enclose the SANT domain; it reads LICPDWSADDEMLLLEGLEIYGLGNWAEVAEHVGTKSKEQCLEHYRNIYLNSP. The residue at position 216 (lysine 216) is an N6-acetyllysine; by GCN5. Residues 368 to 383 are compositionally biased toward basic and acidic residues; sequence RKRKRENEEGMNRGKE. A disordered region spans residues 368 to 388; sequence RKRKRENEEGMNRGKESGQFG. The SWIRM domain maps to 401 to 487; it reads QASSSYVNDL…MLVKKGIAQL (87 aa).

Interacts in vitro with the HAT domain of GCN5 and with the DNA-binding domain of the transcriptional activator DREB1B/CBF1. Interacts with BZIP11. Acetylated in vitro by GCN5, but acetylation is not essential for biological activity. As to expression, expressed in roots, leaves, stems, flowers and siliques, with the strongest activity in the meristematic zones.

Its subcellular location is the nucleus. In terms of biological role, required for the function of some acidic activation domains, which activate transcription from a distant site. The exact mechanism of action is not yet known. ADA2 stimulates the acetyltransferase activity of GCN5 on free histones or nucleosomes, probably by opening up the promoter region. Mediates auxin and cytokinin signals in the control of cell proliferation and might be involved in repression of a freezing tolerance pathway at warm temperature. Involved in the positive regulation of salt-induced gene expression by maintaining locus-specific acetylation of histones H4 and H3. The sequence is that of Transcriptional adapter ADA2b (ADA2B) from Arabidopsis thaliana (Mouse-ear cress).